We begin with the raw amino-acid sequence, 298 residues long: uncharacterized protein (298 aa).

It to M.tuberculosis Rv1486c, M.bovis Mb1522c and M.avium MAV321.

This is an uncharacterized protein from Mycobacterium leprae (strain TN).